A 152-amino-acid chain; its full sequence is UPF0266 membrane protein ESA_01432 (152 aa).

3 consecutive transmembrane segments (helical) span residues 1–21 (MTLT…WAIY), 45–65 (ADSL…VASH), and 67–87 (ALLT…LFWI).

Belongs to the UPF0266 family.

It is found in the cell inner membrane. The sequence is that of UPF0266 membrane protein ESA_01432 from Cronobacter sakazakii (strain ATCC BAA-894) (Enterobacter sakazakii).